The following is a 213-amino-acid chain: MRNFIVTGTDTEVGKTYVSCLIVKSLREAGINAAGFKPVACGDRQDARLLREAGPKDLTLDELNPVFLRNATCPYVAARLENTKVDEKVILRAYDALSAAHECVVVEGVGGWEVPIGPGRNFSDMAADFKLPVLLVIGNKLGAINHALLTLNAIKERGLECLGIVFNNVKDEWDTACVTNRSMVEEFSDAPILGELIHGQDYMDMDVLLERLH.

12 to 17 provides a ligand contact to ATP; the sequence is EVGKTY. Thr-16 serves as a coordination point for Mg(2+). Residue Lys-37 is part of the active site. ATP-binding positions include Asp-46, 107–110, and 167–168; these read EGVG and NN. Asp-46 and Glu-107 together coordinate Mg(2+).

Belongs to the dethiobiotin synthetase family. As to quaternary structure, homodimer. The cofactor is Mg(2+).

The protein localises to the cytoplasm. It carries out the reaction (7R,8S)-7,8-diammoniononanoate + CO2 + ATP = (4R,5S)-dethiobiotin + ADP + phosphate + 3 H(+). The protein operates within cofactor biosynthesis; biotin biosynthesis; biotin from 7,8-diaminononanoate: step 1/2. Functionally, catalyzes a mechanistically unusual reaction, the ATP-dependent insertion of CO2 between the N7 and N8 nitrogen atoms of 7,8-diaminopelargonic acid (DAPA, also called 7,8-diammoniononanoate) to form a ureido ring. The polypeptide is ATP-dependent dethiobiotin synthetase BioD (Akkermansia muciniphila (strain ATCC BAA-835 / DSM 22959 / JCM 33894 / BCRC 81048 / CCUG 64013 / CIP 107961 / Muc)).